Consider the following 565-residue polypeptide: SRSF protein kinase 3 (565 aa).

The disordered stretch occupies residues Met-1 to Gln-44. A compositionally biased stretch (low complexity) spans Ser-10–Ser-31. Ser-49 carries the post-translational modification Phosphoserine. Residues Tyr-78–Leu-563 enclose the Protein kinase domain. ATP-binding positions include Leu-84–Val-92 and Lys-107. Catalysis depends on Asp-211, which acts as the Proton acceptor. A compositionally biased stretch (polar residues) spans Trp-236–Pro-253. 2 disordered regions span residues Trp-236–Leu-280 and Ala-295–Gly-350. Basic residues predominate over residues Ser-262–Lys-277. Residues Ala-325 to Gly-350 are compositionally biased toward low complexity. Residue Ser-328 is modified to Phosphoserine.

Belongs to the protein kinase superfamily. CMGC Ser/Thr protein kinase family. As to expression, exclusively expressed in skeletal and heart muscle.

It localises to the nucleus. The protein localises to the cytoplasm. It carries out the reaction L-seryl-[protein] + ATP = O-phospho-L-seryl-[protein] + ADP + H(+). It catalyses the reaction L-threonyl-[protein] + ATP = O-phospho-L-threonyl-[protein] + ADP + H(+). Its function is as follows. Serine/arginine-rich protein-specific kinase which specifically phosphorylates its substrates at serine residues located in regions rich in arginine/serine dipeptides, known as RS domains. Phosphorylates the SR splicing factor SRSF1 and the lamin-B receptor (LBR) in vitro. Required for normal muscle development. This Mus musculus (Mouse) protein is SRSF protein kinase 3 (Srpk3).